Consider the following 717-residue polypeptide: Adhesion cell surface protein MAD1 (717 aa).

Residues 1 to 19 (MKSALSVVVAAAGVQQASA) form the signal peptide. Low complexity-rich tracts occupy residues 237-254 (TPVT…QTTT) and 262-274 (SKET…QTTP). Disordered stretches follow at residues 237–392 (TPVT…ATTT) and 451–506 (RTQS…TPPC). Tandem repeats lie at residues 275–286 (GKETTPAQQTTP), 287–298 (SKETTPVQQTTS), 299–310 (GKETTPAQQTTP), 311–328 (GKET…QTTP), 329–340 (GKETTPAQQTTP), 341–352 (GKETTPAQQTTP), 353–364 (GKETTPAQQTTP), and 365–376 (GKETTPAQQTTP). Positions 275 to 366 (GKETTPAQQT…TPAQQTTPGK (92 aa)) are enriched in polar residues. Composition is skewed to low complexity over residues 368-392 (TTPA…ATTT) and 484-503 (QPTG…STQT). The region spanning 481–595 (TPEQPTGEKP…TQIITVTGTP (115 aa)) is the CFEM domain. Cystine bridges form between C513–C546, C524–C532, and C534–C568. D529 contacts heme. N614 carries an N-linked (GlcNAc...) asparagine glycan. Residues 632 to 690 (PTPTGGVPNQPPATASVPAGQNPPPVTGQNPPPAVTDQSPPPAITTGTGGVIPPKPTGS) are disordered. Pro residues predominate over residues 652 to 674 (QNPPPVTGQNPPPAVTDQSPPPA). A695 carries GPI-anchor amidated alanine lipidation. Residues 696–717 (GSGRVGAGLGMVLAVAAFVAAL) constitute a propeptide, removed in mature form.

The protein belongs to the RBT5 family. Post-translationally, the GPI-anchor is attached to the protein in the endoplasmic reticulum and serves to target the protein to the cell surface. There, the glucosamine-inositol phospholipid moiety is cleaved off and the GPI-modified mannoprotein is covalently attached via its lipidless GPI glycan remnant to the 1,6-beta-glucan of the outer cell wall layer.

Its subcellular location is the secreted. It localises to the cell wall. It is found in the cell membrane. In terms of biological role, cell surface adhesion protein that plays a key role in virulence by allowing adherence to the insect host surface. Required to orientate the cytoskeleton and stimulate the expression of genes involved in the cell cycle. Is also involved in achieving the septin hourglass shape and subsequent separation of cells. The chain is Adhesion cell surface protein MAD1 from Metarhizium anisopliae (Entomophthora anisopliae).